We begin with the raw amino-acid sequence, 277 residues long: Diaminopimelate epimerase (277 aa).

Residues Asn11 and Asn62 each contribute to the substrate site. Residue Cys71 is the Proton donor of the active site. Residues 72-73, Asn160, Asn193, and 211-212 each bind substrate; these read GN and ER. The active-site Proton acceptor is Cys220. A substrate-binding site is contributed by 221-222; sequence GT.

The protein belongs to the diaminopimelate epimerase family. Homodimer.

Its subcellular location is the cytoplasm. It catalyses the reaction (2S,6S)-2,6-diaminopimelate = meso-2,6-diaminopimelate. The protein operates within amino-acid biosynthesis; L-lysine biosynthesis via DAP pathway; DL-2,6-diaminopimelate from LL-2,6-diaminopimelate: step 1/1. Functionally, catalyzes the stereoinversion of LL-2,6-diaminopimelate (L,L-DAP) to meso-diaminopimelate (meso-DAP), a precursor of L-lysine. In Methanococcus maripaludis (strain DSM 14266 / JCM 13030 / NBRC 101832 / S2 / LL), this protein is Diaminopimelate epimerase.